We begin with the raw amino-acid sequence, 451 residues long: Serine--tRNA ligase (451 aa).

Residue 258 to 260 coordinates L-serine; it reads TSE. ATP is bound at residue 289 to 291; that stretch reads RSE. Residue Glu-312 coordinates L-serine. 376-379 provides a ligand contact to ATP; sequence EISS. Ser-411 lines the L-serine pocket.

Belongs to the class-II aminoacyl-tRNA synthetase family. Type-1 seryl-tRNA synthetase subfamily. In terms of assembly, homodimer. The tRNA molecule binds across the dimer.

It is found in the cytoplasm. The enzyme catalyses tRNA(Ser) + L-serine + ATP = L-seryl-tRNA(Ser) + AMP + diphosphate + H(+). It carries out the reaction tRNA(Sec) + L-serine + ATP = L-seryl-tRNA(Sec) + AMP + diphosphate + H(+). It participates in aminoacyl-tRNA biosynthesis; selenocysteinyl-tRNA(Sec) biosynthesis; L-seryl-tRNA(Sec) from L-serine and tRNA(Sec): step 1/1. In terms of biological role, catalyzes the attachment of serine to tRNA(Ser). Is also able to aminoacylate tRNA(Sec) with serine, to form the misacylated tRNA L-seryl-tRNA(Sec), which will be further converted into selenocysteinyl-tRNA(Sec). The chain is Serine--tRNA ligase from Bordetella bronchiseptica (strain ATCC BAA-588 / NCTC 13252 / RB50) (Alcaligenes bronchisepticus).